Here is a 160-residue protein sequence, read N- to C-terminus: Troponin C, skeletal muscle (160 aa).

EF-hand domains follow at residues 15 to 50 (EMIAEFKAAFDMFDTDGGGDISTKELGTVMRMLGQN), 51 to 86 (PTREELDAIIEEVDEDGSGTIDFEEFLVMMVRQLKE), 91 to 126 (KSEEELAEFFRVFDKNGDGFIDREEFGEILRSSGEP), and 127 to 160 (VSEEEIDELMADGDKNNDGKIDFDEWLKMMENIQ). Ca(2+)-binding residues include D28, D30, D34, E39, D64, D66, S68, T70, E75, D104, N106, D108, E115, D140, N142, D144, K146, and E151.

It belongs to the troponin C family.

Functionally, troponin is the central regulatory protein of striated muscle contraction. Tn consists of three components: Tn-I which is the inhibitor of actomyosin ATPase, Tn-T which contains the binding EF-hand for tropomyosin and Tn-C. The binding of calcium to Tn-C abolishes the inhibitory action of Tn on actin filaments. The protein is Troponin C, skeletal muscle of Anguilla anguilla (European freshwater eel).